We begin with the raw amino-acid sequence, 786 residues long: Mitochondrial intermediate peptidase (786 aa).

A mitochondrion-targeting transit peptide spans 1–29 (MSSILLRSYRHHAKVWTRPSSKSSFIRSL). H567 is a binding site for Zn(2+). The active site involves E568. Zn(2+) contacts are provided by H571 and H574.

The protein belongs to the peptidase M3 family. Zn(2+) serves as cofactor.

The protein resides in the mitochondrion matrix. It carries out the reaction Release of an N-terminal octapeptide as second stage of processing of some proteins imported into the mitochondrion.. Functionally, cleaves proteins, imported into the mitochondrion, to their mature size. While most mitochondrial precursor proteins are processed to the mature form in one step by mitochondrial processing peptidase (MPP), the sequential cleavage by MIP of an octapeptide after initial processing by MPP is a required step for a subgroup of nuclear-encoded precursor proteins destined for the matrix or the inner membrane. The chain is Mitochondrial intermediate peptidase (OCT1) from Meyerozyma guilliermondii (strain ATCC 6260 / CBS 566 / DSM 6381 / JCM 1539 / NBRC 10279 / NRRL Y-324) (Yeast).